The following is a 157-amino-acid chain: Transcription elongation factor GreA (157 aa).

Residues 47–75 are a coiled coil; it reads ENAEYDAAREKQGQIEDRITELENILSNA.

This sequence belongs to the GreA/GreB family.

Functionally, necessary for efficient RNA polymerase transcription elongation past template-encoded arresting sites. The arresting sites in DNA have the property of trapping a certain fraction of elongating RNA polymerases that pass through, resulting in locked ternary complexes. Cleavage of the nascent transcript by cleavage factors such as GreA or GreB allows the resumption of elongation from the new 3'terminus. GreA releases sequences of 2 to 3 nucleotides. This chain is Transcription elongation factor GreA, found in Mycoplasmopsis pulmonis (strain UAB CTIP) (Mycoplasma pulmonis).